Here is a 348-residue protein sequence, read N- to C-terminus: RNA 3'-terminal phosphate cyclase (348 aa).

Residues glutamine 107 and 290–294 contribute to the ATP site; that span reads HLADQ. Histidine 316 serves as the catalytic Tele-AMP-histidine intermediate.

It belongs to the RNA 3'-terminal cyclase family. Type 1 subfamily.

The protein localises to the cytoplasm. It carries out the reaction a 3'-end 3'-phospho-ribonucleotide-RNA + ATP = a 3'-end 2',3'-cyclophospho-ribonucleotide-RNA + AMP + diphosphate. In terms of biological role, catalyzes the conversion of 3'-phosphate to a 2',3'-cyclic phosphodiester at the end of RNA. The mechanism of action of the enzyme occurs in 3 steps: (A) adenylation of the enzyme by ATP; (B) transfer of adenylate to an RNA-N3'P to produce RNA-N3'PP5'A; (C) and attack of the adjacent 2'-hydroxyl on the 3'-phosphorus in the diester linkage to produce the cyclic end product. The biological role of this enzyme is unknown but it is likely to function in some aspects of cellular RNA processing. The protein is RNA 3'-terminal phosphate cyclase of Nostoc punctiforme (strain ATCC 29133 / PCC 73102).